We begin with the raw amino-acid sequence, 357 residues long: MTEITAAMVKELRESTGAGMMDCKNALSETNGDFDKAVQLLREKGLGKAAKKADRLAAEGLVSVKVSDDFTSATVSEINSETDFVAKNDQFIALTKDTTAHIQSNSLQSVEELHSSTINGVKFEEYLKSQIATIGENLVVRRFATLKAGANGVVNGYIHTNGRVGVVIAAACDSAEVASKSRDLLRQICMHIAAMRPSYLSYEDLDMTFVENEYKALVAELEKENEERRRLKDPNKPEHKIPQFASRKQLSDAILKEAEEKIKEELKAQGKPEKIWDNIIPGKMNSFIADNSQLDSKLTLMGQFYVMDDKKTVEQVIAEKEKEFGGKIKIVEFICFEVGEGLEKKTEDFAAEVAAQL.

An involved in Mg(2+) ion dislocation from EF-Tu region spans residues 82–85; that stretch reads TDFV.

Belongs to the EF-Ts family.

The protein localises to the cytoplasm. Its function is as follows. Associates with the EF-Tu.GDP complex and induces the exchange of GDP to GTP. It remains bound to the aminoacyl-tRNA.EF-Tu.GTP complex up to the GTP hydrolysis stage on the ribosome. The polypeptide is Elongation factor Ts (Campylobacter jejuni subsp. jejuni serotype O:2 (strain ATCC 700819 / NCTC 11168)).